The primary structure comprises 5376 residues: Zonadhesin (5376 aa).

The signal sequence occupies residues 1-17 (MALPVWTLMLLVGAAWG). The Extracellular portion of the chain corresponds to 18–5310 (QEQVPAWRPN…TTRKKIEASS (5293 aa)). MAM domains lie at 45–210 (SKCD…TCNQ), 215–374 (QMCT…PCGE), and 377–542 (PQCD…PCRV). N339 and N499 each carry an N-linked (GlcNAc...) asparagine glycan. Positions 547–1170 (EIPSSPLLPP…PTTGVSTTES (624 aa)) are 80 X heptapeptide repeats (approximate) (mucin-like domain). Disordered regions lie at residues 553–579 (LLPPTGPSESTVPTLPMEQPTSPTKAT) and 1037–1113 (TVPP…TVST). A compositionally biased stretch (low complexity) spans 1052–1113 (TEVTTTPPEE…IASEETTVST (62 aa)). Residues 1171–1220 (CPPNAHIELCACPASCESPKPSCQPPCIPGCVCNPGFLFSNNQCINESSC) enclose the TIL 1 domain. N-linked (GlcNAc...) asparagine glycans are attached at residues N1216, N1239, and N1314. The VWFC 1 domain maps to 1227–1275 (KHYKPGEEWFTPNCTERCRCLPGSLMECQISQCGTHTVCQLKSDQYQCE). Positions 1280-1462 (ATCLVYGDLH…DKDWVSSRCQ (183 aa)) constitute a VWFD 1 domain. Cystine bridges form between C1282-C1417 and C1304-C1461. Positions 1555–1608 (CPKNSRYSLCAKPCPETCHPISTTQHCSDKCVEGCECDPGFILSGSECVPSSQC) constitute a TIL 2 domain. In terms of domain architecture, VWFC 2 spans 1609 to 1664 (GCTSFQGRYFKLQEQWFNPDCKEICTCESHNHILCKPWKCKAQEACSYKNGVLGCH). Residues 1669–1849 (ATCMVSGDPH…ILEASDPGCF (181 aa)) enclose the VWFD 2 domain. 2 disulfides stabilise this stretch: C1671/C1809 and C1693/C1848. 3 N-linked (GlcNAc...) asparagine glycosylation sites follow: N1814, N1908, and N1933. One can recognise a TIL 3 domain in the interval 1941–1995 (CPPRSSYNPCANSCPATCLTLSTPRDCPTLPCVEGCECQSGHILSGTTCVPLRQC). Positions 1996-2052 (GCSDQDGSYHLLGESWYTEKTCTTLCTCSAHSNITCSPTACKANHVCLRQEGLLRCA) constitute a VWFC 3 domain. N-linked (GlcNAc...) asparagine glycans are attached at residues N2028, N2111, N2142, and N2332. The 184-residue stretch at 2056–2239 (GECRISEDSQ…KDKSMDPNCQ (184 aa)) folds into the VWFD 3 domain. Cystine bridges form between C2058–C2200 and C2080–C2238. In terms of domain architecture, TIL 4 spans 2340–2398 (CPAHSHYTNCLPSCPPSCLDPDSRCEGSGHKVPATCREGCICQPDYVLLNDKCVLRSHC). Residues 2399 to 2454 (GCKDAQGVFIPAGKTWISEDCTQSCTCMKGSMRCWDFQCPPGTYCKNSNDGSSNCV) form the VWFC 4 domain. A TIL 5 domain is found at 2460-2518 (CPAHSKFTDCLPPCHPSCSDPDGHCEGISTNAHSNCKEGCVCQPGYVLRNDKCVLRIEC). The VWFC 5 domain occupies 2519 to 2574 (GCQHTQGGFIPAGKNWTSRGCSQSCDCMEGVIRCQNFQCPSGTYCQDIEDGTSNCA). N-linked (GlcNAc...) asparagine glycosylation is found at N2533 and N2575. One can recognise a TIL 6 domain in the interval 2580-2638 (CPAHSSFTNCLPPCQPSCSDPEGHCGGSTTKAPSACQEGCVCEPDYVVLNNKCVPRIEC). The region spanning 2639-2694 (GCKDAQGVLIPADKIWINKGCTQTCACVTGTIHCRDFQCPSGTYCKDIKDDASNCT) is the VWFC 6 domain. N-linked (GlcNAc...) asparagine glycosylation occurs at N2692. Residues 2700–2758 (CPDHSLYTHCLPSCLLSCSDPDGLCRGTSPEAPSTCKEGCVCDPDYVLSNDKCVLRIEC) enclose the TIL 7 domain. The region spanning 2759 to 2814 (GCKDAQGVLIPAGKTWINRGCTQSCSCMGGAIQCQNFKCPSEAYCQDMEDGNSNCT) is the VWFC 7 domain. N2812 carries an N-linked (GlcNAc...) asparagine glycan. The TIL 8 domain maps to 2820 to 2878 (CPAHSHYTNCLPTCQPSCSDPDGHCEGSSTKAPSACKEGCVCEPDYVMLNNKCVPRIEC). The region spanning 2879-2934 (GCKDTQGVLIPADKTWINRGCTQSCTCRGGAIQCQKYHCSSGTYCKDMEDDSSSCA) is the VWFC 8 domain. Positions 2940–2998 (CPAHSHFTNCLPPCQPSCLDSEGHCEGSTTKAPSACQEGCVCEPDYVVLNNKCVPRIEC) constitute a TIL 9 domain. The region spanning 2999–3054 (GCKDAQGVLIPADKTWINRGCTQSCTCKGGAIQCQKFQCPSETYCKDIEDGNSNCT) is the VWFC 9 domain. 4 N-linked (GlcNAc...) asparagine glycosylation sites follow: N3052, N3065, N3144, and N3172. Residues 3060 to 3118 (CPANSNFTSCLPSCQPSCSNTDVHCEGSSPNTLSSCREGCVCQSGYVLHNDKCILRNQC) form the TIL 10 domain. Residues 3119–3174 (GCKDAQGALIPEGKTWITSGCTQSCNCTGGAIQCQNFQCPLKTYCKDLKDGSSNCT) enclose the VWFC 10 domain. Positions 3180-3238 (CPAHSRYTNCLPSCPPLCLDPEGLCEGTSPKVPSTCREGCICQPGYLMHKNKCVLRIFC) constitute a TIL 11 domain. The 56-residue stretch at 3239 to 3294 (GCKNTQGAFISADKTWISRGCTQSCTCPAGAIHCRNFKCPSGTYCKNGDNGSSNCT) folds into the VWFC 11 domain. N-linked (GlcNAc...) asparagine glycosylation is found at N3288 and N3292. A TIL 12 domain is found at 3300–3355 (CPTNSQFTDCLPSCVPSCSNRCEVTSPSVPSSCREGCLCNHGFVFSEDKCVPRTQC). The 56-residue stretch at 3356–3411 (GCKDARGAIIPAGKTWTSKGCTQSCACVEGNIQCQNFQCPPETYCKDNSEGSSTCT) folds into the VWFC 12 domain. Residues 3417 to 3475 (CPAHTQYTSCLPSCLPSCLDPEGLCKDISPKVPSTCKEGCVCQSGYVLNSDKCVLRAEC) form the TIL 13 domain. The VWFC 13 domain maps to 3476–3531 (DCKDAQGALIPAGKTWTSPGCTQSCACMGGAVQCQSSQCPPGTYCKDNEDGNSNCA). The TIL 14 domain maps to 3537–3595 (CPAHSLFTNCLPPCLPSCLDPDGLCKGASPKVPSTCKEGCICQSGYVLSNNKCLLRNRC). The region spanning 3596-3651 (GCKDAHGALIPEDKTWVSRGCTQSCVCTGGSIQCLSSQCPPGAYCKDNEDGSSNCA) is the VWFC 14 domain. In terms of domain architecture, TIL 15 spans 3657-3715 (CPANSHYTDCFPPCPPSCSDPEGHCEASGPRVLSTCREGCLCNPGFVLDRDKCVPRVEC). The 56-residue stretch at 3716-3771 (GCKDAQGALIPSGKTWTSPGCTQSCACMGGVVQCQSSQCPPGTYCKDNEDGNSNCA) folds into the VWFC 15 domain. Positions 3777-3835 (CPTHSNYTDCLPFCLPSCLDPSALCGGTSPKGPSTCKEGCVCQPGYVLDKDKCILKIEC) constitute a TIL 16 domain. An N-linked (GlcNAc...) asparagine glycan is attached at N3782. The 56-residue stretch at 3836–3891 (GCRDTQGAVIPAGKTWLSTGCIQSCACVEGTIQCQNFQCPPGTYCNHNNNCAKIPL) folds into the VWFC 16 domain. One can recognise a TIL 17 domain in the interval 3893–3951 (CPAHSHFTSCLPSCPPSCANLDGSCEQTSPKVPSTCKEGCLCQPGYFLNNGKCVLQTHC). One can recognise a VWFC 17 domain in the interval 3952 to 4007 (DCKDAEGGLVPAGKTWTSKDCTQSCACTGGAVQCQNFQCPLGTYCKDSGDGSSNCT). N4005 is a glycosylation site (N-linked (GlcNAc...) asparagine). Residues 4029–4087 (CPAHSHFTSCLPSCPPSCSNLDGSCVESNFKAPSVCKKGCICQPGYLLNNDKCVLRIQC) form the TIL 18 domain. The VWFC 18 domain occupies 4088–4143 (GCKDTQGGLIPAGRTWISSDCTKSCSCMGGIIQCRDFQCPPGTYCKESNDSSRTCA). N4136 carries N-linked (GlcNAc...) asparagine glycosylation. The TIL 19 domain maps to 4149–4207 (CPAHSHYTNCLPACSRSCTDLDGHCEGTSPKVPSPCKEGCLCQPGYVVHNHKCVLQIHC). Residues 4208 to 4262 (GCKDAQGGFVPAGKTWISRGCTQSCACVGGAVQCHNFTCPTGTQCQNSSCSKITV) enclose the VWFC 19 domain. Residues N4243 and N4254 are each glycosylated (N-linked (GlcNAc...) asparagine). One can recognise a TIL 20 domain in the interval 4264-4322 (CPAHSQYTTCLPSCLPSCFDPEGLCGGASPRAPSTCREGCVCEADYVLREDKCVLRTQC). The region spanning 4323-4378 (GCKDAQGDLIPANKTWLTRGCAQKCTCKGGNIHCWNFKCPLGTECKDSVDGGSNCT) is the VWFC 20 domain. Residues N4335 and N4376 are each glycosylated (N-linked (GlcNAc...) asparagine). The 59-residue stretch at 4384 to 4442 (CPAHSHHTYCLPSCIPSCSNVNDRCESTSLQRPSTCIEGCLCHSGFVFSKDKCVPRTQC) folds into the TIL 21 domain. The VWFC 21 domain maps to 4443-4498 (GCKDSQGTLIPAGKNWITTGCSQRCTCTGGLVQCHDFQCPSGAECQDIEDGNSNCV). One can recognise a TIL 22 domain in the interval 4504-4562 (CPAHSHYSKCLPPCQPSCSDPDGHCEGTSPEAPSTCEEGCVCEPDYVLSNDKCVPSSEC). Residues 4563 to 4618 (GCKDAHGVLIPESKTWVSRGCTKNCTCKGGTVQCHDFSCPTGSRCLDNNEGNSNCV) enclose the VWFC 22 domain. Residue N4586 is glycosylated (N-linked (GlcNAc...) asparagine). In terms of domain architecture, TIL 23 spans 4624 to 4682 (CPAHSLYTNCLPSCLPSCSDPEGLCGGTSPEVPSTCKEGCICQSGYVLHKNKCMLRIHC). The VWFC 23 domain maps to 4683 to 4738 (DCKDFQGSLIKTGQTWISSGCSKICTCKGGFFQCQSYKCPSGTQCEESEDGSSNCV). In terms of domain architecture, TIL 24 spans 4744-4802 (CPANSLYTHCLPTCLPSCSNPDGRCEGTSHKAPSTCREGCVCQPGYLLNKDTCVHKNQC). In terms of domain architecture, VWFC 24 spans 4803–4858 (GCKDIRGNIIPAGNTWISSDCTQSCACTDGVIQCQNFVCPSGSHCQYNEDGSSDCA). Positions 4863-5038 (ERCTIFGDPY…SWEVKAQHAF (176 aa)) constitute a VWFD 4 domain. A disulfide bond links C4865 and C5001. N5136 carries N-linked (GlcNAc...) asparagine glycosylation. One can recognise a TIL 25 domain in the interval 5150 to 5203 (CPANTVYQRCMTPCPASCAKFVTPKVCEGPCVEGCASLPGYIYSDTQSLPVTHC). The VWFC 25 domain maps to 5204–5258 (GCTADGIYYKLGDSFVTNDCSQHCTCASQGILLCEPYGCRAGESCMVANFTRGCF). N-linked (GlcNAc...) asparagine glycosylation occurs at N5252. The region spanning 5259–5295 (QDSPCLQNPCHNDGRCEEQGATFICHCDFGYGGEFCT) is the EGF-like domain. 3 cysteine pairs are disulfide-bonded: C5263–C5274, C5268–C5283, and C5285–C5294. A helical transmembrane segment spans residues 5311-5337 (LVAILPGVLVMVLVPVLLPRVYVYMAT). Topologically, residues 5338–5376 (RTTMGRRRMKRKEKKLLRQSRLRLEDADVPEPTFKATEF) are cytoplasmic.

Probably forms covalent oligomers. In terms of tissue distribution, in testis, primarily in haploid spermatids.

It is found in the cell membrane. Functionally, binds in a species-specific manner to the zona pellucida of the egg. May be involved in gamete recognition and/or signaling. This is Zonadhesin (Zan) from Mus musculus (Mouse).